Here is a 211-residue protein sequence, read N- to C-terminus: Thiamine-phosphate synthase (211 aa).

Residues 37–41 (QLRIK) and Asn-69 each bind 4-amino-2-methyl-5-(diphosphooxymethyl)pyrimidine. Asp-70 and Asp-89 together coordinate Mg(2+). Ser-108 provides a ligand contact to 4-amino-2-methyl-5-(diphosphooxymethyl)pyrimidine. Position 134-136 (134-136 (TQT)) interacts with 2-[(2R,5Z)-2-carboxy-4-methylthiazol-5(2H)-ylidene]ethyl phosphate. Lys-137 contributes to the 4-amino-2-methyl-5-(diphosphooxymethyl)pyrimidine binding site. 2-[(2R,5Z)-2-carboxy-4-methylthiazol-5(2H)-ylidene]ethyl phosphate-binding positions include Gly-166 and 186–187 (VS).

Belongs to the thiamine-phosphate synthase family. Mg(2+) is required as a cofactor.

The catalysed reaction is 2-[(2R,5Z)-2-carboxy-4-methylthiazol-5(2H)-ylidene]ethyl phosphate + 4-amino-2-methyl-5-(diphosphooxymethyl)pyrimidine + 2 H(+) = thiamine phosphate + CO2 + diphosphate. It carries out the reaction 2-(2-carboxy-4-methylthiazol-5-yl)ethyl phosphate + 4-amino-2-methyl-5-(diphosphooxymethyl)pyrimidine + 2 H(+) = thiamine phosphate + CO2 + diphosphate. The enzyme catalyses 4-methyl-5-(2-phosphooxyethyl)-thiazole + 4-amino-2-methyl-5-(diphosphooxymethyl)pyrimidine + H(+) = thiamine phosphate + diphosphate. It participates in cofactor biosynthesis; thiamine diphosphate biosynthesis; thiamine phosphate from 4-amino-2-methyl-5-diphosphomethylpyrimidine and 4-methyl-5-(2-phosphoethyl)-thiazole: step 1/1. Condenses 4-methyl-5-(beta-hydroxyethyl)thiazole monophosphate (THZ-P) and 2-methyl-4-amino-5-hydroxymethyl pyrimidine pyrophosphate (HMP-PP) to form thiamine monophosphate (TMP). This Citrobacter koseri (strain ATCC BAA-895 / CDC 4225-83 / SGSC4696) protein is Thiamine-phosphate synthase.